A 124-amino-acid chain; its full sequence is Protein MGF 110-4L (124 aa).

A signal peptide spans 1–28 (MLVIFLGILGLLANQVLGLPTQAGGHLR). Asparagine 64 is a glycosylation site (N-linked (GlcNAc...) asparagine; by host). Positions 121-124 (KEDL) match the Prevents secretion from ER motif.

The protein belongs to the asfivirus MGF 110 family.

It is found in the virion. It localises to the host endoplasmic reticulum-Golgi intermediate compartment. Causes the redistribution of lumenal ER protein to an enlarged ERGIC compartment. In African swine fever virus (strain Badajoz 1971 Vero-adapted) (Ba71V), this protein is Protein MGF 110-4L.